The sequence spans 416 residues: Sulfoquinovosyl glycerol-binding protein SmoF (416 aa).

The first 29 residues, 1–29 (MTLKTIRGKALMGAALCATMLTFSGQAFA), serve as a signal peptide directing secretion. 3-(6-sulfo-alpha-D-quinovosyl)glycerol is bound at residue Gln-40. His-41 serves as a coordination point for 6-sulfo-D-quinovose. Residues Ser-71, Asp-95, Asp-141, Gly-194, Thr-248, Gly-303, Trp-304, and Arg-373 each contribute to the 3-(6-sulfo-alpha-D-quinovosyl)glycerol site. The 6-sulfo-D-quinovose site is built by Gly-303, Trp-304, and Arg-373.

Belongs to the bacterial solute-binding protein 1 family. As to quaternary structure, the complex is probably composed of two ATP-binding proteins (SmoE), two transmembrane proteins (SmoG and SmoH) and a solute-binding protein (SmoF).

It is found in the periplasm. Functionally, part of the ABC transporter complex SmoEFGH involved in sulfoquinovosyl glycerol (SQGro) uptake. Binds sulfoquinovosyl glycerol (SQGro). Can also bind sulfoquinovose (SQ), methyl alpha-sulfoquinovoside (SQMe) and a short-chain derivative of sulfoquinovosyl diacylglycerol (SQDG). Cannot bind D-glucose and D-glucuronic acid. This chain is Sulfoquinovosyl glycerol-binding protein SmoF, found in Agrobacterium fabrum (strain C58 / ATCC 33970) (Agrobacterium tumefaciens (strain C58)).